A 120-amino-acid chain; its full sequence is Cytochrome c-550 (120 aa).

The helical transmembrane segment at 5–25 (PLIPFLLIAVLGIGLTFFLSV) threads the bilayer. Topologically, residues 26 to 120 (KGLDDSREIA…DMAEWVSKIK (95 aa)) are periplasmic. C60, C63, H64, and M99 together coordinate heme c.

Post-translationally, binds 1 heme c group covalently per subunit.

It is found in the cell membrane. Not essential for growth on minimal or rich media. This chain is Cytochrome c-550 (cccA), found in Bacillus subtilis (strain 168).